The primary structure comprises 336 residues: ATP-dependent 6-phosphofructokinase (336 aa).

Residue Gly11 coordinates ATP. An ADP-binding site is contributed by 21 to 25 (RAVVR). ATP is bound by residues 72 to 73 (RY) and 102 to 105 (GDGS). Asp103 serves as a coordination point for Mg(2+). 125–127 (TID) lines the substrate pocket. Asp127 functions as the Proton acceptor in the catalytic mechanism. Arg154 lines the ADP pocket. Residues Arg162 and 169–171 (MGR) each bind substrate. ADP-binding positions include 185 to 187 (GAD), Lys211, and 213 to 215 (KKH). Substrate contacts are provided by residues Glu222, Arg244, and 250-253 (HIQR).

It belongs to the phosphofructokinase type A (PFKA) family. ATP-dependent PFK group I subfamily. Prokaryotic clade 'B1' sub-subfamily. As to quaternary structure, homotetramer. The cofactor is Mg(2+).

It localises to the cytoplasm. It carries out the reaction beta-D-fructose 6-phosphate + ATP = beta-D-fructose 1,6-bisphosphate + ADP + H(+). It participates in carbohydrate degradation; glycolysis; D-glyceraldehyde 3-phosphate and glycerone phosphate from D-glucose: step 3/4. With respect to regulation, allosterically activated by ADP and other diphosphonucleosides, and allosterically inhibited by phosphoenolpyruvate. Catalyzes the phosphorylation of D-fructose 6-phosphate to fructose 1,6-bisphosphate by ATP, the first committing step of glycolysis. The sequence is that of ATP-dependent 6-phosphofructokinase from Streptococcus sanguinis (strain SK36).